We begin with the raw amino-acid sequence, 430 residues long: Adenylosuccinate synthetase (430 aa).

Residues 12-18 and 40-42 contribute to the GTP site; these read GDEGKGK and GHT. Asp-13 serves as the catalytic Proton acceptor. Mg(2+) contacts are provided by Asp-13 and Gly-40. Residues 13-16, 38-41, Thr-130, Arg-144, Gln-224, Thr-239, and Arg-303 each bind IMP; these read DEGK and NAGH. His-41 acts as the Proton donor in catalysis. 299–305 contacts substrate; the sequence is VNTGRKR. Residues Arg-305, 331 to 333, and 413 to 415 contribute to the GTP site; these read KLD and STS.

Belongs to the adenylosuccinate synthetase family. Homodimer. The cofactor is Mg(2+).

It is found in the cytoplasm. It carries out the reaction IMP + L-aspartate + GTP = N(6)-(1,2-dicarboxyethyl)-AMP + GDP + phosphate + 2 H(+). The protein operates within purine metabolism; AMP biosynthesis via de novo pathway; AMP from IMP: step 1/2. In terms of biological role, plays an important role in the de novo pathway of purine nucleotide biosynthesis. Catalyzes the first committed step in the biosynthesis of AMP from IMP. The chain is Adenylosuccinate synthetase from Rhodopseudomonas palustris (strain ATCC BAA-98 / CGA009).